The chain runs to 802 residues: Oligophrenin-1 (802 aa).

One can recognise a PH domain in the interval 265-368 (QPTIEGYLYT…WMEAMDGKEP (104 aa)). In terms of domain architecture, Rho-GAP spans 380–564 (MELNEVGFKF…ILIEHFGKIY (185 aa)). 3 disordered regions span residues 569 to 589 (EESA…HKPI), 607 to 770 (LDES…NAGE), and 783 to 802 (FETA…GDES). Residues 616 to 627 (HQTPNGTITSSI) show a composition bias toward polar residues. Residues 716-732 (HHKEGDADSFSKVRPPG) are compositionally biased toward basic and acidic residues.

As to quaternary structure, interacts with HOMER1. Interacts with AMPA receptor complexes. Interacts with SH3GL2 (endophilin-A1). Interacts (via C-terminus) with NR1D1.

Its subcellular location is the postsynapse. The protein resides in the presynapse. It localises to the cell projection. It is found in the axon. The protein localises to the dendritic spine. Its subcellular location is the dendrite. The protein resides in the cytoplasm. Stimulates GTP hydrolysis of members of the Rho family. Its action on RHOA activity and signaling is implicated in growth and stabilization of dendritic spines, and therefore in synaptic function. Critical for the stabilization of AMPA receptors at postsynaptic sites. Critical for the regulation of synaptic vesicle endocytosis at pre-synaptic terminals. Required for the localization of NR1D1 to dendrites, can suppress its repressor activity and protect it from proteasomal degradation. This is Oligophrenin-1 (OPHN1) from Pan troglodytes (Chimpanzee).